The primary structure comprises 284 residues: NADH-cytochrome b5 reductase 1 (284 aa).

A helical transmembrane segment spans residues 8-28 (PLVIFSTLAAIILAAVAVYVV). Positions 41–144 (DVFQKFPLIE…RGPKGFFTYT (104 aa)) constitute an FAD-binding FR-type domain. Residues 124-139 (DSKS…GPKG) and 150-182 (HLGM…KISL) contribute to the FAD site.

The protein belongs to the flavoprotein pyridine nucleotide cytochrome reductase family. In terms of assembly, monomer. Component of the 2-(3-amino-3-carboxypropyl)histidine synthase complex composed of DPH1, DPH2, DPH3 and a NADH-dependent reductase, predominantly CBR1. FAD is required as a cofactor.

Its subcellular location is the mitochondrion outer membrane. It carries out the reaction 2 Fe(III)-[cytochrome b5] + NADH = 2 Fe(II)-[cytochrome b5] + NAD(+) + H(+). It catalyses the reaction 2 Fe(3+)-[Dph3] + NADH = 2 Fe(2+)-[Dph3] + NAD(+) + H(+). It participates in protein modification; peptidyl-diphthamide biosynthesis. Functionally, NADH-dependent reductase for DPH3 and cytochrome b5. Required for the first step of diphthamide biosynthesis, a post-translational modification of histidine which occurs in elongation factor 2. DPH1 and DPH2 transfer a 3-amino-3-carboxypropyl (ACP) group from S-adenosyl-L-methionine (SAM) to a histidine residue, the reaction is assisted by a reduction system comprising DPH3 and a NADH-dependent reductase, predominantly CBR1. By reducing DPH3, also involved in the formation of the tRNA wobble base modification mcm5s 2U (5-methoxycarbonylmethyl-2-thiouridine), mediated by the elongator complex. The cytochrome b5/NADH cytochrome b5 reductase electron transfer system supports the catalytic activity of several sterol biosynthetic enzymes. This Meyerozyma guilliermondii (strain ATCC 6260 / CBS 566 / DSM 6381 / JCM 1539 / NBRC 10279 / NRRL Y-324) (Yeast) protein is NADH-cytochrome b5 reductase 1 (CBR1).